The chain runs to 79 residues: Translational regulator CsrA (79 aa).

This sequence belongs to the CsrA/RsmA family. In terms of assembly, homodimer; the beta-strands of each monomer intercalate to form a hydrophobic core, while the alpha-helices form wings that extend away from the core.

The protein resides in the cytoplasm. Functionally, a translational regulator that binds mRNA to regulate translation initiation and/or mRNA stability. Usually binds in the 5'-UTR at or near the Shine-Dalgarno sequence preventing ribosome-binding, thus repressing translation. Its main target seems to be the major flagellin gene, while its function is anatagonized by FliW. This chain is Translational regulator CsrA, found in Shouchella clausii (strain KSM-K16) (Alkalihalobacillus clausii).